We begin with the raw amino-acid sequence, 357 residues long: MPRKTTIRISSNALASNLRTIKNYANKSKVWSVIKSNAYGHTIKAALKGLKETSGFAVLELNEAVLLRENGWNGPILLLEGFFEESDLLEICQYKITTVIHNDWQLNYIKQYDIKSPIDVYLKLNSGMNRLGFNEKDFIRTWYDLSNLKKISSLTLMSHFSLGFSTKTVNKQMNIIRKIFKILNPTLCLANSTAIIFHTYTHKDWIRPGIILYGILPKENKKISKKFNLKPVMTLESRIISIQNIKSKEYIGYGKNYYSNKSNLIGIVSCGYADGYPFSVPFSGTPVFVNGTRTQIIGSVCMDMLTIDLNDCPNAKIGSKVELWGNNISINEISKLANTTSYELMCRISSRVLVKIE.

Lys35 functions as the Proton acceptor; specific for D-alanine in the catalytic mechanism. Lys35 carries the N6-(pyridoxal phosphate)lysine modification. Arg130 lines the substrate pocket. Tyr253 (proton acceptor; specific for L-alanine) is an active-site residue. Met302 is a binding site for substrate.

The protein belongs to the alanine racemase family. The cofactor is pyridoxal 5'-phosphate.

It carries out the reaction L-alanine = D-alanine. Its pathway is amino-acid biosynthesis; D-alanine biosynthesis; D-alanine from L-alanine: step 1/1. Its function is as follows. Catalyzes the interconversion of L-alanine and D-alanine. May also act on other amino acids. In Wigglesworthia glossinidia brevipalpis, this protein is Alanine racemase (alr).